The chain runs to 142 residues: Large ribosomal subunit protein uL13 (142 aa).

This sequence belongs to the universal ribosomal protein uL13 family. Part of the 50S ribosomal subunit.

In terms of biological role, this protein is one of the early assembly proteins of the 50S ribosomal subunit, although it is not seen to bind rRNA by itself. It is important during the early stages of 50S assembly. This chain is Large ribosomal subunit protein uL13, found in Aromatoleum aromaticum (strain DSM 19018 / LMG 30748 / EbN1) (Azoarcus sp. (strain EbN1)).